The chain runs to 757 residues: MDVNPTLLFLKVPAQNAISTTFPYTGDPPYSHGTGTGYTMDTVNRTHQYSEKGKWTTNTETGAPQLNPIDGPLPEDNEPSGYAQTDCVLEAMAFLEESHPGIFENSCLETMEVVQQTRVDRLTQGRQTYDWTLNRNQPAATALANTIEVFRSNGLTANESGRLIDFLKDVMESMDKEEMEITTHFQRKRRVRDNMTKKMVTQRTIGKKKQRVNKRSYLIRALTLNTMTKDAERGKLKRRAIATPGMQIRGFVYFVETLARSICEKLEQSGLPVGGNEKKAKLANVVRKMMTNSQDTELSFTITGDNTKWNENQNPRMFLAMITYITKNQPEWFRNVLSIAPIMFSNKMARLGKGYMFESKSMKLRTQIPAEMLASIDLKYFNESTRKKIEKIRPLLIDGTASLSPGMMMGMFNMLSTVLGVSILNLGQKRYTKTTYWWDGLQSSDDFALIVNAPNHEGIQAGVDRFYRTCKLVGINMSKKKSYINRTGTFEFTSFFYRYGFVANFSMELPSFGVSGINESADMSIGVTVIKNNMINNDLGPATAQMALQLFIKDYRYTYRCHRGDTQIQTRRSFELKKLWEQTRSKAGLLVSDGGPNLYNIRNLHIPEVCLKWELMDEDYQGRLCNPLNPFVSHKEIESVNNAVVMPAHGPAKSMEYDAVATTHSWIPKRNRSILNTSQRGILEDEQMYQKCCNLFEKFFPSSSYRRPVGISSMVEAMVSRARIDARIDFESGRIKKEEFAEIMKICSTIEELRRQK.

Positions 50–82 (SEKGKWTTNTETGAPQLNPIDGPLPEDNEPSGY) are disordered. A compositionally biased stretch (polar residues) spans 55-64 (WTTNTETGAP). 2 short sequence motifs (nuclear localization signal) span residues 187–195 (RKRRVRDNM) and 203–216 (RTIG…NKRS). The tract at residues 249 to 256 (RGFVYFVE) is promoter-binding site. The RdRp catalytic domain occupies 286 to 483 (VRKMMTNSQD…GINMSKKKSY (198 aa)).

It belongs to the influenza viruses polymerase PB1 family. As to quaternary structure, influenza RNA polymerase is composed of three subunits: PB1, PB2 and PA. Interacts (via N-terminus) with PA (via C-terminus). Interacts (via C-terminus) with PB2 (via N-terminus); this interaction is essential for transcription initiation. Phosphorylated by host PRKCA.

It localises to the host nucleus. The protein resides in the host cytoplasm. The catalysed reaction is RNA(n) + a ribonucleoside 5'-triphosphate = RNA(n+1) + diphosphate. Functionally, RNA-dependent RNA polymerase which is responsible for replication and transcription of virus RNA segments. The transcription of viral mRNAs occurs by a unique mechanism called cap-snatching. 5' methylated caps of cellular mRNAs are cleaved after 10-13 nucleotides by PA. In turn, these short capped RNAs are used as primers by PB1 for transcription of viral mRNAs. During virus replication, PB1 initiates RNA synthesis and copy vRNA into complementary RNA (cRNA) which in turn serves as a template for the production of more vRNAs. The polypeptide is RNA-directed RNA polymerase catalytic subunit (Influenza A virus (strain A/Hong Kong/1/1968 H3N2)).